The primary structure comprises 663 residues: Endopolyphosphatase (663 aa).

Residues 1-14 are Cytoplasmic-facing; that stretch reads MAVNEKDVGRKSRV. A helical; Signal-anchor for type II membrane protein transmembrane segment spans residues 15 to 35; the sequence is SVVLWVFIALGTLFLCKNAFT. Residues 36-663 lie on the Vacuolar side of the membrane; the sequence is FSSESIHGLK…ISTGYEDERN (628 aa). N-linked (GlcNAc...) asparagine glycosylation is found at Asn-487 and Asn-526. The interval 534–564 is disordered; it reads SAEQNKKKKKKNGKPDKSIPRKKPDELPAGP. The span at 546 to 559 shows a compositional bias: basic and acidic residues; that stretch reads GKPDKSIPRKKPDE.

The protein belongs to the endopolyphosphatase PPN1 family. Requires a divalent metal cation as cofactor. Processing by proteases in the vacuole may be required for activation.

It is found in the vacuole membrane. The enzyme catalyses [phosphate](n+1) + n H2O = (n+1) phosphate + n H(+). Its function is as follows. Catalyzes the hydrolysis of inorganic polyphosphate (polyP) chains of many hundreds of phosphate residues into shorter lengths. This is Endopolyphosphatase (PPN1) from Candida glabrata (strain ATCC 2001 / BCRC 20586 / JCM 3761 / NBRC 0622 / NRRL Y-65 / CBS 138) (Yeast).